The following is a 336-amino-acid chain: Melanoma-associated antigen B17 (336 aa).

A compositionally biased stretch (basic residues) spans 1–17 (MPRGQASKRRAREKRRQ). The disordered stretch occupies residues 1 to 108 (MPRGQASKRR…SSSESTGRDL (108 aa)). Composition is skewed to low complexity over residues 39-54 (PSSSSPACQSPPQSFP) and 62-80 (SQRASYPSSPASAVSLTSS). Residues 90 to 103 (ESPNSFHGPSSSES) are compositionally biased toward polar residues. Residues 109–336 (LNTKTGELVQ…RARASRSFQP (228 aa)) enclose the MAGE domain.

This chain is Melanoma-associated antigen B17 (MAGEB17), found in Homo sapiens (Human).